The chain runs to 764 residues: uncharacterized protein (764 aa).

Over 1 to 646 (MKEENGFAGF…LTKLYTFPFT (646 aa)) the chain is Lumenal. A disordered region spans residues 22 to 173 (LNDTAPTKSQ…SAITAPSRKV (152 aa)). N23 carries N-linked (GlcNAc...) asparagine glycosylation. 2 stretches are compositionally biased toward polar residues: residues 25 to 41 (TAPT…NNEG) and 61 to 82 (SEAS…QSPS). S80 bears the Phosphoserine mark. Residues 98 to 113 (ENQENEADEAENEETS) show a composition bias toward acidic residues. Residue N118 is glycosylated (N-linked (GlcNAc...) asparagine). Over residues 118–145 (NHTENTEEIAEESRPLERTHSGSNHHEA) the composition is skewed to basic and acidic residues. A compositionally biased stretch (polar residues) spans 158 to 173 (NTLSQGSAITAPSRKV). Residues 197-264 (RDFHRIFKVL…TEIVSVEKKS (68 aa)) enclose the GRAM domain. 2 N-linked (GlcNAc...) asparagine glycosylation sites follow: N240 and N330. Residues 320-406 (ASGNHHSGSS…DGNSVKKMNE (87 aa)) form a disordered region. The span at 321-330 (SGNHHSGSSN) shows a compositional bias: low complexity. The segment covering 331-340 (QSINADSSAG) has biased composition (polar residues). Residues 352 to 371 (ANDESSEDDDEDNNTDEANE) are compositionally biased toward acidic residues. N-linked (GlcNAc...) asparagine glycans are attached at residues N364 and N376. Over residues 389-399 (HSDNVVLSDGN) the composition is skewed to polar residues. Positions 432-598 (LAHVLCSDVV…AFENYKVSPK (167 aa)) constitute a VASt domain. N-linked (GlcNAc...) asparagine glycosylation is found at N442 and N554. The span at 598–613 (KGRRKKITKHTKKKNK) shows a compositional bias: basic residues. The disordered stretch occupies residues 598–626 (KGRRKKITKHTKKKNKHASETSVAPEKVD). Residue N627 is glycosylated (N-linked (GlcNAc...) asparagine). The helical transmembrane segment at 647–667 (IITWLMHPTHLLLVVMFSMLV) threads the bilayer. Topologically, residues 668–764 (LQWWYMQQIL…LRKLEASGYI (97 aa)) are cytoplasmic.

This sequence belongs to the YSP2 family.

The protein resides in the membrane. This is an uncharacterized protein from Schizosaccharomyces pombe (strain 972 / ATCC 24843) (Fission yeast).